A 293-amino-acid polypeptide reads, in one-letter code: Large ribosomal subunit protein uL4c (293 aa).

Residues 1–50 (MATSTSSSLSLSFFSSSLFSSKSRNFSSKPILKLPSSSHSQTSLSLSIKS) constitute a chloroplast transit peptide. 2 disordered regions span residues 107-138 (EVRG…PGGG) and 259-293 (YGVD…EPAE). A compositionally biased stretch (basic residues) spans 116–126 (YPQKKTGRARR). The span at 263–293 (TLEDEDEEEEEEEEGEEVDDGVEDGTPEPAE) shows a compositional bias: acidic residues.

Belongs to the universal ribosomal protein uL4 family. Component of the chloroplast large ribosomal subunit (LSU). Mature 70S chloroplast ribosomes of higher plants consist of a small (30S) and a large (50S) subunit. The 30S small subunit contains 1 molecule of ribosomal RNA (16S rRNA) and 24 different proteins. The 50S large subunit contains 3 rRNA molecules (23S, 5S and 4.5S rRNA) and 33 different proteins. In terms of tissue distribution, highly expressed in cotyledon and weakly in roots.

The protein resides in the plastid. Its subcellular location is the chloroplast. In terms of biological role, component of the chloroplast ribosome (chloro-ribosome), a dedicated translation machinery responsible for the synthesis of chloroplast genome-encoded proteins, including proteins of the transcription and translation machinery and components of the photosynthetic apparatus. The polypeptide is Large ribosomal subunit protein uL4c (RPL4) (Spinacia oleracea (Spinach)).